The primary structure comprises 330 residues: Delta-aminolevulinic acid dehydratase (330 aa).

Zn(2+)-binding residues include Cys122, Cys124, His131, and Cys132. The Schiff-base intermediate with substrate role is filled by Lys199. Residue Lys199 is modified to N6-succinyllysine. Arg209 is a 5-aminolevulinate binding site. Ser215 carries the post-translational modification Phosphoserine. Residue Arg221 coordinates 5-aminolevulinate. Cys223 is a binding site for Zn(2+). The Schiff-base intermediate with substrate role is filled by Lys252. At Lys252 the chain carries N6-succinyllysine. 5-aminolevulinate contacts are provided by Ser279 and Tyr318.

It belongs to the ALAD family. As to quaternary structure, homooctamer; active form. Homohexamer; low activity form. Zn(2+) is required as a cofactor.

It is found in the cytoplasm. Its subcellular location is the cytosol. The catalysed reaction is 2 5-aminolevulinate = porphobilinogen + 2 H2O + H(+). The protein operates within porphyrin-containing compound metabolism; protoporphyrin-IX biosynthesis; coproporphyrinogen-III from 5-aminolevulinate: step 1/4. With respect to regulation, can alternate between a fully active homooctamer and a low-activity homohexamer. A bound magnesium ion may promote the assembly of the fully active homooctamer. The magnesium-binding site is absent in the low-activity homohexamer. Inhibited by compounds that favor the hexameric state. Inhibited by divalent lead ions. The lead ions partially displace the zinc cofactor. Functionally, catalyzes an early step in the biosynthesis of tetrapyrroles. Binds two molecules of 5-aminolevulinate per subunit, each at a distinct site, and catalyzes their condensation to form porphobilinogen. The protein is Delta-aminolevulinic acid dehydratase (Alad) of Mus musculus (Mouse).